Reading from the N-terminus, the 184-residue chain is Flagellar transcriptional regulator FlhC (184 aa).

4 residues coordinate Zn(2+): cysteine 144, cysteine 147, cysteine 163, and cysteine 166.

It belongs to the FlhC family. As to quaternary structure, heterohexamer composed of two FlhC and four FlhD subunits. Each FlhC binds a FlhD dimer, forming a heterotrimer, and a hexamer assembles by dimerization of two heterotrimers. Requires Zn(2+) as cofactor.

Its subcellular location is the cytoplasm. Functions in complex with FlhD as a master transcriptional regulator that regulates transcription of several flagellar and non-flagellar operons by binding to their promoter region. Activates expression of class 2 flagellar genes, including fliA, which is a flagellum-specific sigma factor that turns on the class 3 genes. Also regulates genes whose products function in a variety of physiological pathways. The protein is Flagellar transcriptional regulator FlhC of Verminephrobacter eiseniae (strain EF01-2).